The sequence spans 300 residues: Ribosomal protein bS6--L-glutamate ligase (300 aa).

The region spanning 104–287 (LQLLARQGID…IAGRMIQWIE (184 aa)) is the ATP-grasp domain. ATP contacts are provided by residues lysine 141, 178–179 (EY), aspartate 187, and 211–213 (RSN). Mg(2+)-binding residues include aspartate 248, glutamate 260, and asparagine 262. Positions 248, 260, and 262 each coordinate Mn(2+).

The protein belongs to the RimK family. Mg(2+) is required as a cofactor. Requires Mn(2+) as cofactor.

Functionally, an L-glutamate ligase that catalyzes the ATP-dependent post-translational addition of glutamate residues to the C-terminus of ribosomal protein bS6 (RpsF). Is also able to catalyze the synthesis of poly-alpha-glutamate in vitro, via ATP hydrolysis from unprotected glutamate as substrate. The number of glutamate residues added to either RpsF or to poly-alpha-glutamate changes with pH. The chain is Ribosomal protein bS6--L-glutamate ligase from Salmonella schwarzengrund (strain CVM19633).